A 696-amino-acid polypeptide reads, in one-letter code: HIPL2 protein (696 aa).

The N-terminal stretch at 1–24 (MAKTNQAITICSLLLLLLLSETTS) is a signal peptide. N-linked (GlcNAc...) asparagine glycans are attached at residues N38, N69, N74, N108, N124, N148, N175, N339, N431, N513, N519, N528, N581, and N651. The GPI-anchor amidated serine moiety is linked to residue S672. Residues 673–696 (SARKLCFSVFLLLSLLMMFLTLLD) constitute a propeptide, removed in mature form.

The protein belongs to the PQQ oxidoreductase GdhB family. The cofactor is pyrroloquinoline quinone.

It localises to the cell membrane. The sequence is that of HIPL2 protein (HIPL2) from Arabidopsis thaliana (Mouse-ear cress).